Here is a 225-residue protein sequence, read N- to C-terminus: Ribonuclease 3 (225 aa).

An RNase III domain is found at 7-132 (MKAFEARLGY…VIAAVYRDGG (126 aa)). Residue Glu45 participates in Mg(2+) binding. Asp49 is a catalytic residue. Mg(2+) contacts are provided by Asp118 and Glu121. Residue Glu121 is part of the active site. In terms of domain architecture, DRBM spans 157–225 (DAKTALQEWA…AARKLLDSLD (69 aa)).

It belongs to the ribonuclease III family. As to quaternary structure, homodimer. The cofactor is Mg(2+).

Its subcellular location is the cytoplasm. The enzyme catalyses Endonucleolytic cleavage to 5'-phosphomonoester.. Functionally, digests double-stranded RNA. Involved in the processing of primary rRNA transcript to yield the immediate precursors to the large and small rRNAs (23S and 16S). Processes some mRNAs, and tRNAs when they are encoded in the rRNA operon. Processes pre-crRNA and tracrRNA of type II CRISPR loci if present in the organism. The polypeptide is Ribonuclease 3 (Ruegeria pomeroyi (strain ATCC 700808 / DSM 15171 / DSS-3) (Silicibacter pomeroyi)).